The following is a 76-amino-acid chain: Small ribosomal subunit protein bS18 (76 aa).

The protein belongs to the bacterial ribosomal protein bS18 family. In terms of assembly, part of the 30S ribosomal subunit. Forms a tight heterodimer with protein bS6.

Its function is as follows. Binds as a heterodimer with protein bS6 to the central domain of the 16S rRNA, where it helps stabilize the platform of the 30S subunit. The chain is Small ribosomal subunit protein bS18 from Symbiobacterium thermophilum (strain DSM 24528 / JCM 14929 / IAM 14863 / T).